The primary structure comprises 296 residues: Lipoyl synthase (296 aa).

7 residues coordinate [4Fe-4S] cluster: Cys34, Cys39, Cys45, Cys60, Cys64, Cys67, and Ser276. Positions 46 to 265 (WGEGTATFMI…GEVALSMGFK (220 aa)) constitute a Radical SAM core domain.

The protein belongs to the radical SAM superfamily. Lipoyl synthase family. [4Fe-4S] cluster is required as a cofactor.

Its subcellular location is the cytoplasm. It carries out the reaction [[Fe-S] cluster scaffold protein carrying a second [4Fe-4S](2+) cluster] + N(6)-octanoyl-L-lysyl-[protein] + 2 oxidized [2Fe-2S]-[ferredoxin] + 2 S-adenosyl-L-methionine + 4 H(+) = [[Fe-S] cluster scaffold protein] + N(6)-[(R)-dihydrolipoyl]-L-lysyl-[protein] + 4 Fe(3+) + 2 hydrogen sulfide + 2 5'-deoxyadenosine + 2 L-methionine + 2 reduced [2Fe-2S]-[ferredoxin]. The protein operates within protein modification; protein lipoylation via endogenous pathway; protein N(6)-(lipoyl)lysine from octanoyl-[acyl-carrier-protein]: step 2/2. In terms of biological role, catalyzes the radical-mediated insertion of two sulfur atoms into the C-6 and C-8 positions of the octanoyl moiety bound to the lipoyl domains of lipoate-dependent enzymes, thereby converting the octanoylated domains into lipoylated derivatives. The chain is Lipoyl synthase from Pyrobaculum arsenaticum (strain DSM 13514 / JCM 11321 / PZ6).